A 297-amino-acid chain; its full sequence is Ribosomal protein L11 methyltransferase (297 aa).

4 residues coordinate S-adenosyl-L-methionine: threonine 139, glycine 164, aspartate 186, and asparagine 233.

This sequence belongs to the methyltransferase superfamily. PrmA family.

Its subcellular location is the cytoplasm. The catalysed reaction is L-lysyl-[protein] + 3 S-adenosyl-L-methionine = N(6),N(6),N(6)-trimethyl-L-lysyl-[protein] + 3 S-adenosyl-L-homocysteine + 3 H(+). Functionally, methylates ribosomal protein L11. This is Ribosomal protein L11 methyltransferase from Trichodesmium erythraeum (strain IMS101).